Here is a 241-residue protein sequence, read N- to C-terminus: Pyridoxal phosphate phosphatase PHOSPHO2 (241 aa).

The active-site Nucleophile is Asp-8. Mg(2+) contacts are provided by Asp-8 and Asp-10. Asp-10 (proton donor) is an active-site residue. Residues Asp-19 and Asp-99 each contribute to the substrate site. Position 179 (Asp-179) interacts with Mg(2+).

Belongs to the HAD-like hydrolase superfamily. PHOSPHO family. Mg(2+) serves as cofactor.

The catalysed reaction is pyridoxal 5'-phosphate + H2O = pyridoxal + phosphate. Its function is as follows. Phosphatase that has high activity toward pyridoxal 5'-phosphate (PLP). Also active at much lower level toward pyrophosphate, phosphoethanolamine (PEA), phosphocholine (PCho), phospho-l-tyrosine, fructose-6-phosphate, p-nitrophenyl phosphate, and h-glycerophosphate. The polypeptide is Pyridoxal phosphate phosphatase PHOSPHO2 (Phospho2) (Mus musculus (Mouse)).